Consider the following 311-residue polypeptide: HPr kinase/phosphorylase (311 aa).

Active-site residues include His-138 and Lys-159. 153-160 (GDSGIGKS) is a binding site for ATP. A Mg(2+)-binding site is contributed by Ser-160. Asp-177 serves as the catalytic Proton acceptor; for phosphorylation activity. Proton donor; for dephosphorylation activity. Residues 201 to 210 (LEIRGVGIID) form an important for the catalytic mechanism of both phosphorylation and dephosphorylation region. Glu-202 is a binding site for Mg(2+). Arg-243 is an active-site residue. Residues 264–269 (PVKTGR) form an important for the catalytic mechanism of dephosphorylation region.

The protein belongs to the HPrK/P family. In terms of assembly, homohexamer. Mg(2+) is required as a cofactor.

It catalyses the reaction [HPr protein]-L-serine + ATP = [HPr protein]-O-phospho-L-serine + ADP + H(+). It carries out the reaction [HPr protein]-O-phospho-L-serine + phosphate + H(+) = [HPr protein]-L-serine + diphosphate. Its function is as follows. Catalyzes the ATP- as well as the pyrophosphate-dependent phosphorylation of a specific serine residue in HPr, a phosphocarrier protein of the phosphoenolpyruvate-dependent sugar phosphotransferase system (PTS). HprK/P also catalyzes the pyrophosphate-producing, inorganic phosphate-dependent dephosphorylation (phosphorolysis) of seryl-phosphorylated HPr (P-Ser-HPr). The two antagonistic activities of HprK/P are regulated by several intracellular metabolites, which change their concentration in response to the absence or presence of rapidly metabolisable carbon sources (glucose, fructose, etc.) in the growth medium. Therefore, by controlling the phosphorylation state of HPr, HPrK/P is a sensor enzyme that plays a major role in the regulation of carbon metabolism and sugar transport: it mediates carbon catabolite repression (CCR), and regulates PTS-catalyzed carbohydrate uptake and inducer exclusion. The chain is HPr kinase/phosphorylase from Streptococcus agalactiae serotype Ia (strain ATCC 27591 / A909 / CDC SS700).